Here is a 194-residue protein sequence, read N- to C-terminus: ATP-dependent Clp protease proteolytic subunit 1 (194 aa).

The active-site Nucleophile is the Ser99. His124 is a catalytic residue.

It belongs to the peptidase S14 family. In terms of assembly, fourteen ClpP subunits assemble into 2 heptameric rings which stack back to back to give a disk-like structure with a central cavity, resembling the structure of eukaryotic proteasomes.

The protein localises to the cytoplasm. The catalysed reaction is Hydrolysis of proteins to small peptides in the presence of ATP and magnesium. alpha-casein is the usual test substrate. In the absence of ATP, only oligopeptides shorter than five residues are hydrolyzed (such as succinyl-Leu-Tyr-|-NHMec, and Leu-Tyr-Leu-|-Tyr-Trp, in which cleavage of the -Tyr-|-Leu- and -Tyr-|-Trp bonds also occurs).. Functionally, cleaves peptides in various proteins in a process that requires ATP hydrolysis. Has a chymotrypsin-like activity. Plays a major role in the degradation of misfolded proteins. The chain is ATP-dependent Clp protease proteolytic subunit 1 from Borreliella burgdorferi (strain ATCC 35210 / DSM 4680 / CIP 102532 / B31) (Borrelia burgdorferi).